Consider the following 87-residue polypeptide: Large ribosomal subunit protein eL31 (87 aa).

The protein belongs to the eukaryotic ribosomal protein eL31 family.

This Methanoculleus marisnigri (strain ATCC 35101 / DSM 1498 / JR1) protein is Large ribosomal subunit protein eL31.